The sequence spans 188 residues: Probable DNA-directed RNA polymerase subunit delta (188 aa).

The HTH HARE-type domain maps to 14–81; that stretch reads LSMIEVAHAL…GNNVWALRSW (68 aa). Residues 96–188 are disordered; it reads EIEDEEEEEK…EDDSDDTDED (93 aa). 2 stretches are compositionally biased toward acidic residues: residues 118–150 and 158–188; these read IEDEIDPEDEEGTKETTEEDMSYDTQAEDEDKD and ELAEVELDNVDEEVDIEVEDDEDDSDDTDED.

This sequence belongs to the RpoE family. As to quaternary structure, RNAP is composed of a core of 2 alpha, a beta and a beta' subunits. The core is associated with a delta subunit and one of several sigma factors.

In terms of biological role, participates in both the initiation and recycling phases of transcription. In the presence of the delta subunit, RNAP displays an increased specificity of transcription, a decreased affinity for nucleic acids, and an increased efficiency of RNA synthesis because of enhanced recycling. This chain is Probable DNA-directed RNA polymerase subunit delta, found in Lactococcus lactis subsp. cremoris (strain MG1363).